Here is a 244-residue protein sequence, read N- to C-terminus: DNA polymerase sliding clamp (244 aa).

Belongs to the PCNA family. In terms of assembly, homotrimer. The subunits circularize to form a toroid; DNA passes through its center. Replication factor C (RFC) is required to load the toroid on the DNA.

In terms of biological role, sliding clamp subunit that acts as a moving platform for DNA processing. Responsible for tethering the catalytic subunit of DNA polymerase and other proteins to DNA during high-speed replication. This chain is DNA polymerase sliding clamp, found in Methanobrevibacter smithii (strain ATCC 35061 / DSM 861 / OCM 144 / PS).